Here is a 213-residue protein sequence, read N- to C-terminus: DELTA-actitoxin-Aas1a (213 aa).

The N-terminal stretch at 1–19 (MSRLIIAFIVVTMVCSAIA) is a signal peptide. A propeptide spanning residues 20 to 34 (LPKKKVEPLEKDEKR) is cleaved from the precursor. A plays an important role in the hemolytic activity region spans residues 37-46 (AVAGAVIEGG). The N-terminal region stretch occupies residues 45–64 (GGNLVMSVLDRILEAIGDVN). Ser-88, Val-121, Ser-139, Pro-141, Tyr-167, Tyr-171, and Tyr-172 together coordinate phosphocholine. Residues 139–154 (SIPYDYNLYSNWWNVK) form a trp-rich region, which is important for the binding to lipid membrane region. The Cell attachment site, crucial for protein stability motif lies at 178 to 180 (KGD).

Belongs to the actinoporin family. Sea anemone subfamily. In terms of assembly, octamer or nonamer in membranes. Monomer in the soluble state.

It localises to the secreted. The protein resides in the nematocyst. It is found in the target cell membrane. In terms of biological role, pore-forming protein that forms cation-selective hydrophilic pores of around 1 nm and causes cytolysis. Pore formation is a multi-step process that involves specific recognition of membrane sphingomyelin (but neither cholesterol nor phosphatidylcholine) using aromatic rich region and adjacent phosphocholine (POC) binding site, firm binding to the membrane (mainly driven by hydrophobic interactions) accompanied by the transfer of the N-terminal region to the lipid-water interface and finally pore formation after oligomerization of monomers. This protein shows potent hemolytic activity (EC(50)=8.8 ng/ml) that is specifically inhibited by sphingomyelin. Shows no phospholipase A2 activity, nor antimicrobial activity against the four bacteria tested. Is lethal to crayfish. The chain is DELTA-actitoxin-Aas1a from Anthopleura asiatica (Sea anemone).